Consider the following 329-residue polypeptide: MVKTQRVVITPGEPAGIGPDLVVQLAQREWPVELVVCADTTLLTDRAAMLGLPLTLRPYSPNSPAQPQTTGTLTLLPVALRESVTAGQLAIENGHYVVETLARACDGCLNGEFAALITGPVHKGVINDAGIPFTGHTEFFEERSQAKKVVMMLATEELRVALATTHLPLRDIADAITPALLHEVIAILHHDLRTKFGIAEPRILVCGLNPHAGEGGHMGTEEIDTIIPVLDELRAQGMKLNGPLPADTLFQPKYLDNADAVLAMYHDQGLPVLKYQGFGRGVNITLGLPFIRTSVDHGTALELAGRGEADVGSFITALNLAIKMIVNTQ.

2 residues coordinate substrate: histidine 136 and threonine 137. 3 residues coordinate a divalent metal cation: histidine 166, histidine 211, and histidine 266. Residues lysine 274, asparagine 283, and arginine 292 each coordinate substrate.

This sequence belongs to the PdxA family. Homodimer. Zn(2+) is required as a cofactor. It depends on Mg(2+) as a cofactor. Requires Co(2+) as cofactor.

It is found in the cytoplasm. The catalysed reaction is 4-(phosphooxy)-L-threonine + NAD(+) = 3-amino-2-oxopropyl phosphate + CO2 + NADH. Its pathway is cofactor biosynthesis; pyridoxine 5'-phosphate biosynthesis; pyridoxine 5'-phosphate from D-erythrose 4-phosphate: step 4/5. Functionally, catalyzes the NAD(P)-dependent oxidation of 4-(phosphooxy)-L-threonine (HTP) into 2-amino-3-oxo-4-(phosphooxy)butyric acid which spontaneously decarboxylates to form 3-amino-2-oxopropyl phosphate (AHAP). The polypeptide is 4-hydroxythreonine-4-phosphate dehydrogenase (Escherichia coli (strain SE11)).